The chain runs to 145 residues: MIKTILVVCIGNICRSPMAQALLRQALPGVSVISAGIGALSGYPADPSAVEVMAQHGIDISEHRAQQLTGSLVNRADLILVMGGAQKREIQARHPSKTGSVFRLGEMEQFDIDDPYRKQMMAFEDALAMIQRGVDAWVPRIRALG.

C9 functions as the Nucleophile in the catalytic mechanism. R15 is a catalytic residue. D114 serves as the catalytic Proton donor.

The protein belongs to the low molecular weight phosphotyrosine protein phosphatase family.

The enzyme catalyses O-phospho-L-tyrosyl-[protein] + H2O = L-tyrosyl-[protein] + phosphate. It participates in glycan metabolism; exopolysaccharide biosynthesis. May be involved in assembly or function of the EPS I polymerization/export complex and/or the EpsB ATPase. Alternatively it may function in the removal of the terminal phosphate from C55-isoprenyl pyrophosphate in order to recycle the C55-isoprenyl phosphate lipid carrier used in the synthesis of polysaccharide repeat units. The protein is Probable low molecular weight protein-tyrosine-phosphatase EpsP (epsP) of Ralstonia solanacearum (Pseudomonas solanacearum).